The following is a 100-amino-acid chain: Protein Vpr (100 aa).

Residues 1–42 form a homooligomerization region; the sequence is MEQALENQGPAREPFNEWTLELLEELKEEAVRHFPRPWLQAC. Phosphoserine; by host occurs at positions 79, 98, and 100.

The protein belongs to the HIV-1 VPR protein family. As to quaternary structure, homooligomer, may form homodimer. Interacts with p6-gag region of the Pr55 Gag precursor protein through a (Leu-X-X)4 motif near the C-terminus of the P6gag protein. Interacts with host UNG. May interact with host RAD23A/HHR23A. Interacts with host VPRBP/DCAF1, leading to hijack the CUL4A-RBX1-DDB1-DCAF1/VPRBP complex, mediating ubiquitination of host proteins such as TERT and ZGPAT and arrest of the cell cycle in G2 phase. In terms of processing, phosphorylated on several residues by host. These phosphorylations regulate VPR activity for the nuclear import of the HIV-1 pre-integration complex.

It localises to the virion. The protein localises to the host nucleus. The protein resides in the host extracellular space. Its function is as follows. During virus replication, may deplete host UNG protein, and incude G2-M cell cycle arrest. Acts by targeting specific host proteins for degradation by the 26S proteasome, through association with the cellular CUL4A-DDB1 E3 ligase complex by direct interaction with host VPRPB/DCAF-1. Cell cycle arrest reportedly occurs within hours of infection and is not blocked by antiviral agents, suggesting that it is initiated by the VPR carried into the virion. Additionally, VPR induces apoptosis in a cell cycle dependent manner suggesting that these two effects are mechanistically linked. Detected in the serum and cerebrospinal fluid of AIDS patient, VPR may also induce cell death to bystander cells. In terms of biological role, during virus entry, plays a role in the transport of the viral pre-integration (PIC) complex to the host nucleus. This function is crucial for viral infection of non-dividing macrophages. May act directly at the nuclear pore complex, by binding nucleoporins phenylalanine-glycine (FG)-repeat regions. This chain is Protein Vpr, found in Human immunodeficiency virus type 1 group O (isolate MVP5180) (HIV-1).